A 248-amino-acid chain; its full sequence is Conoporin-Cn1 (248 aa).

An N-terminal signal peptide occupies residues 1 to 23 (MGVQFPALKTMVTVFLLLMGNMS). The interval 45-64 (TPGSSLYGVALKDLADTSYN) is N-terminal region. 5 residues coordinate phosphocholine: glycine 120, serine 138, proline 140, tyrosine 167, and tyrosine 171.

It belongs to the actinoporin family. Conoidea subfamily. Octamer or nonamer in membranes. Monomer in the soluble state. In terms of processing, 9 isoforms are detected in the injectable venom, mainly corresponding to different oxidative states. Expressed by the venom duct.

The protein localises to the secreted. It is found in the nematocyst. It localises to the target cell membrane. Functionally, pore-forming protein that forms pores of around 1 nm and causes cardiac stimulation and cytolysis. This Conus consors (Singed cone) protein is Conoporin-Cn1.